A 317-amino-acid chain; its full sequence is Electron transfer flavoprotein subunit alpha (317 aa).

The protein belongs to the ETF alpha-subunit/FixB family. As to quaternary structure, heterodimer of an alpha and a beta subunit. Requires FAD as cofactor.

It is found in the cytoplasm. The protein operates within lipid metabolism; butanoate metabolism. Part of an electron transfer flavoprotein involved in syntrophic growth of S.wolfei with butyrate. Probably receives electrons from butyryl-CoA dehydrogenases, and transfers them to the membrane-bound quinone oxidoreductase Swol_0698. The polypeptide is Electron transfer flavoprotein subunit alpha (Syntrophomonas wolfei subsp. wolfei (strain DSM 2245B / Goettingen)).